Consider the following 412-residue polypeptide: DNA primase DnaG (412 aa).

One can recognise a Toprim domain in the interval 165 to 243; that stretch reads PELIIVEGRA…KLDYVARAPT (79 aa). Mg(2+) is bound by residues glutamate 171, aspartate 216, and aspartate 218.

This sequence belongs to the archaeal DnaG primase family. In terms of assembly, forms a ternary complex with MCM helicase and DNA. Component of the archaeal exosome complex. Mg(2+) serves as cofactor.

It carries out the reaction ssDNA + n NTP = ssDNA/pppN(pN)n-1 hybrid + (n-1) diphosphate.. Functionally, RNA polymerase that catalyzes the synthesis of short RNA molecules used as primers for DNA polymerase during DNA replication. Also part of the exosome, which is a complex involved in RNA degradation. Acts as a poly(A)-binding protein that enhances the interaction between heteromeric, adenine-rich transcripts and the exosome. The sequence is that of DNA primase DnaG from Sulfolobus acidocaldarius (strain ATCC 33909 / DSM 639 / JCM 8929 / NBRC 15157 / NCIMB 11770).